A 449-amino-acid chain; its full sequence is tRNA (guanine(37)-N(1))-methyltransferase (449 aa).

Residues His-216, 254–255 (DL), 282–283 (DG), and Asn-345 contribute to the S-adenosyl-L-methionine site.

It belongs to the class I-like SAM-binding methyltransferase superfamily. TRM5/TYW2 family. As to quaternary structure, monomer.

The protein localises to the mitochondrion matrix. It is found in the nucleus. Its subcellular location is the cytoplasm. The enzyme catalyses guanosine(37) in tRNA + S-adenosyl-L-methionine = N(1)-methylguanosine(37) in tRNA + S-adenosyl-L-homocysteine + H(+). Its function is as follows. Specifically methylates the N1 position of guanosine-37 in various cytoplasmic and mitochondrial tRNAs. Methylation is not dependent on the nature of the nucleoside 5' of the target nucleoside. This is the first step in the biosynthesis of wybutosine (yW), a modified base adjacent to the anticodon of tRNAs and required for accurate decoding. The protein is tRNA (guanine(37)-N(1))-methyltransferase of Candida albicans (strain SC5314 / ATCC MYA-2876) (Yeast).